Here is a 359-residue protein sequence, read N- to C-terminus: Aminoacyl tRNA synthase complex-interacting multifunctional protein 1 (359 aa).

Positions 52 to 92 are required for fibroblast proliferation; it reads AVLKRLEQKGAEADQIIEYLKQQVALLKEKAVLQATLREEK. An interaction with HSP90B1 region spans residues 100-241; the sequence is KLKKEIEELK…APRTVISGLV (142 aa). A required for endothelial cell death region spans residues 149 to 163; that stretch reads SVSTISCSIKEHSKG. Residues 156 to 196 form a disordered region; that stretch reads SIKEHSKGGGEEKKVKEKTDKKGEKKEKKLQSAAPSADSKP. Basic and acidic residues predominate over residues 157 to 185; that stretch reads IKEHSKGGGEEKKVKEKTDKKGEKKEKKL. The interval 163 to 239 is required for endothelial cell migration; the sequence is GGGEEKKVKE…EAAPRTVISG (77 aa). Lys-184 participates in a covalent cross-link: Glycyl lysine isopeptide (Lys-Gly) (interchain with G-Cter in SUMO1). Ser-187 is subject to Phosphoserine. One can recognise a tRNA-binding domain in the interval 198 to 299; sequence DVSRLDLRIG…NGSVPGDRIT (102 aa). Lys-316 is modified (N6-succinyllysine).

As to quaternary structure, homodimer. Part of the multisynthetase complex (MSC), a multisubunit complex that groups tRNA ligases for Arg (RARS1), Asp (DARS1), Gln (QARS1), Ile (IARS1), Leu (LARS1), Lys (KARS1), Met (MARS1) the bifunctional ligase for Glu and Pro (EPRS1) and the auxiliary subunits AIMP1/p43, AIMP2/p38 and EEF1E1/p18. Interacts (via N-terminus) with RARS1 (via N-terminus). Part of a complex composed of RARS1, QARS1 and AIMP1. Interacts (via C-terminus) with SMURF2. Interacts (via N-terminus) with HSP90B1/gp96 (via C-terminus). Interacts with PSMA7. Interacts with TARS3. Post-translationally, cleaved by caspase-7 in response to apoptosis to produce EMAP-II.

It is found in the nucleus. The protein localises to the cytoplasm. Its subcellular location is the cytosol. The protein resides in the secreted. It localises to the endoplasmic reticulum. It is found in the golgi apparatus. Functionally, non-catalytic component of the multisynthase complex. Stimulates the catalytic activity of cytoplasmic arginyl-tRNA synthase. Binds tRNA. Possesses inflammatory cytokine activity. Negatively regulates TGF-beta signaling through stabilization of SMURF2 by binding to SMURF2 and inhibiting its SMAD7-mediated degradation. Involved in glucose homeostasis through induction of glucagon secretion at low glucose levels. Promotes dermal fibroblast proliferation and wound repair. Regulates KDELR1-mediated retention of HSP90B1/gp96 in the endoplasmic reticulum. Plays a role in angiogenesis by inducing endothelial cell migration at low concentrations and endothelian cell apoptosis at high concentrations. Induces maturation of dendritic cells and monocyte cell adhesion. In Cricetulus griseus (Chinese hamster), this protein is Aminoacyl tRNA synthase complex-interacting multifunctional protein 1 (AIMP1).